The following is a 183-amino-acid chain: MAGGPPNTKAEMEMSLAEELNHGRQGENQEHLVIAEMMELGSRSRGASQKKQKLEQKAAGSASAKRVWNMTATRPKKMGSQLPKPRMLRESGHGDAHLQEYAGNFQGIRFHYDRNPGTDAVAQTSLEEFNVLEMEVMRRQLYAVNRRLRALEEQGATWRHRETLIIAVLVSASIANLWLWMNQ.

The segment at 42-66 (SRSRGASQKKQKLEQKAAGSASAKR) is disordered. A helical membrane pass occupies residues 163–181 (TLIIAVLVSASIANLWLWM).

As to quaternary structure, interacts with BIK and RNF183. Interacts with IMMT/MIC60and EMD. As to expression, testis-specific in fetus (aged from 6 to 11 weeks). In adult, expressed predominantly in testis, with some expression in lung, heart, kidney, adrenal gland and whole brain. Highly expressed in certain types of cancer tissues such as hepatocellular carcinoma, colon and gastric cancer. Weakly expressed in normal pancreas.

It localises to the mitochondrion. Its subcellular location is the mitochondrion outer membrane. The protein localises to the endoplasmic reticulum membrane. Its function is as follows. Involved in the regulation of endoplasmic reticulum (ER)-mitochondria coupling. Negatively regulates the ER-mitochondria distance and Ca(2+) transfer from ER to mitochondria possibly implicating it in the regulation of apoptosis. May collaborate with RNF183 to restrain BIK protein levels thus regulating apoptotic signaling. The protein is Fetal and adult testis-expressed transcript protein (FATE1) of Homo sapiens (Human).